Reading from the N-terminus, the 470-residue chain is Probable G-protein coupled receptor 152 (470 aa).

A disordered region spans residues methionine 1–serine 25. Topologically, residues methionine 1–threonine 33 are extracellular. A helical transmembrane segment spans residues valine 34–alanine 54. At glycine 55–arginine 65 the chain is on the cytoplasmic side. The helical transmembrane segment at leucine 66 to phenylalanine 86 threads the bilayer. Topologically, residues glutamine 87–arginine 105 are extracellular. An intrachain disulfide couples cysteine 104 to cysteine 182. A helical membrane pass occupies residues phenylalanine 106–serine 126. Topologically, residues leucine 127–proline 148 are cytoplasmic. A helical membrane pass occupies residues leucine 149–phenylalanine 169. Over proline 170–arginine 194 the chain is Extracellular. A helical membrane pass occupies residues methionine 195 to threonine 215. At glutamine 216–glutamine 257 the chain is on the cytoplasmic side. Residues leucine 258–valine 278 form a helical membrane-spanning segment. The Extracellular portion of the chain corresponds to tyrosine 279–aspartate 281. Residues tyrosine 282–leucine 302 form a helical membrane-spanning segment. At arginine 303–threonine 470 the chain is on the cytoplasmic side. The segment at proline 322 to threonine 470 is disordered. Composition is skewed to polar residues over residues phenylalanine 325–aspartate 335 and alanine 348–threonine 414. Positions proline 415–proline 425 are enriched in low complexity.

Belongs to the G-protein coupled receptor 1 family.

Its subcellular location is the cell membrane. Orphan receptor. The protein is Probable G-protein coupled receptor 152 (GPR152) of Homo sapiens (Human).